The primary structure comprises 389 residues: Chalcone synthase J (389 aa).

Residue C164 is part of the active site.

It belongs to the thiolase-like superfamily. Chalcone/stilbene synthases family.

The catalysed reaction is (E)-4-coumaroyl-CoA + 3 malonyl-CoA + 3 H(+) = 2',4,4',6'-tetrahydroxychalcone + 3 CO2 + 4 CoA. Its pathway is secondary metabolite biosynthesis; flavonoid biosynthesis. Its function is as follows. The primary product of this enzyme is 4,2',4',6'-tetrahydroxychalcone (also termed naringenin-chalcone or chalcone) which can under specific conditions spontaneously isomerize into naringenin. The sequence is that of Chalcone synthase J (CHSJ) from Petunia hybrida (Petunia).